A 128-amino-acid chain; its full sequence is Phosphoribosyl-AMP cyclohydrolase (128 aa).

A Mg(2+)-binding site is contributed by Asp79. A Zn(2+)-binding site is contributed by Cys80. The Mg(2+) site is built by Asp81 and Asp83. The Zn(2+) site is built by Cys97 and Cys104.

This sequence belongs to the PRA-CH family. In terms of assembly, homodimer. The cofactor is Mg(2+). Zn(2+) is required as a cofactor.

Its subcellular location is the cytoplasm. The catalysed reaction is 1-(5-phospho-beta-D-ribosyl)-5'-AMP + H2O = 1-(5-phospho-beta-D-ribosyl)-5-[(5-phospho-beta-D-ribosylamino)methylideneamino]imidazole-4-carboxamide. It functions in the pathway amino-acid biosynthesis; L-histidine biosynthesis; L-histidine from 5-phospho-alpha-D-ribose 1-diphosphate: step 3/9. Catalyzes the hydrolysis of the adenine ring of phosphoribosyl-AMP. This Saccharophagus degradans (strain 2-40 / ATCC 43961 / DSM 17024) protein is Phosphoribosyl-AMP cyclohydrolase.